A 369-amino-acid polypeptide reads, in one-letter code: MSGNTLGTLFTVTTFGESHGPAIGCVIDGCPPGMALTEADVQLELDRRKPGTSRHVTQRQEPDQVEILSGVFEGVTTGAPIALLIRNTDQRSKDYGNIAETFRPGHADYTYWQKYGVRDYRGGGRSSARLTAPVVGAGAIAKKWLRERFGVEVRGYMSALGEIEIPFVDWSHVRENPFFAPNADIVPQLEGYMDALRKDGDSIGARIDVVASGVPVGWGEPLFDRLDADIAHAMMGINAVKGVEIGAGFASVAQRGSVHGDELTPDGFVGNHAGGVLGGISTGQDITVSIAIKPTSSIRTPRRSITRAGEPAVVETFGRHDPCVGIRATPIAESMLALVLIDHALRHRAQCGDVSSATPRIAARAPDAQ.

Residues Arg-48 and Arg-54 each contribute to the NADP(+) site. FMN-binding positions include 125-127 (RSS), 238-239 (NA), Gly-278, 293-297 (KPTSS), and Arg-319.

Belongs to the chorismate synthase family. Homotetramer. It depends on FMNH2 as a cofactor.

The enzyme catalyses 5-O-(1-carboxyvinyl)-3-phosphoshikimate = chorismate + phosphate. It functions in the pathway metabolic intermediate biosynthesis; chorismate biosynthesis; chorismate from D-erythrose 4-phosphate and phosphoenolpyruvate: step 7/7. Functionally, catalyzes the anti-1,4-elimination of the C-3 phosphate and the C-6 proR hydrogen from 5-enolpyruvylshikimate-3-phosphate (EPSP) to yield chorismate, which is the branch point compound that serves as the starting substrate for the three terminal pathways of aromatic amino acid biosynthesis. This reaction introduces a second double bond into the aromatic ring system. The sequence is that of Chorismate synthase from Burkholderia pseudomallei (strain 1106a).